Here is an 857-residue protein sequence, read N- to C-terminus: A-kinase anchor protein 1, mitochondrial (857 aa).

Residues 1–29 (MAIQLRSLFPLALPGMLALLGWWWFFSRK) constitute a mitochondrion transit peptide. The residue at position 55 (Ser55) is a Phosphoserine. The disordered stretch occupies residues 65–121 (VAPTVTQPPGREEQRCVDKPSTEPLALPRTRQVRRRSESSGNLPSVADTRSQPGPCR). Over residues 74 to 85 (GREEQRCVDKPS) the composition is skewed to basic and acidic residues. Ser101, Ser103, and Ser164 each carry phosphoserine. A compositionally biased stretch (polar residues) spans 103–116 (SSGNLPSVADTRSQ). 2 disordered regions span residues 165–198 (ALGK…GDAV) and 260–303 (FVEP…VPEN). Residues 286 to 299 (SDRDLAGELDKDET) are compositionally biased toward basic and acidic residues. Residues 306 to 319 (IKQAAFQLISQVIL) form a PKA-RII subunit binding domain region. 3 disordered regions span residues 336 to 437 (QVHP…NPRG), 466 to 497 (STSG…TQPF), and 512 to 554 (EDGW…QAGS). Positions 354-379 (PASQETSLGQDTSDPASTRTGATASP) are enriched in polar residues. Phosphothreonine is present on Thr401. A compositionally biased stretch (polar residues) spans 466–482 (STSGLEDSCTETISSSG). A Phosphothreonine modification is found at Thr487. Residues Ser527 and Ser546 each carry the phosphoserine modification. Residues 545–554 (DSPQSVQAGS) show a composition bias toward polar residues. In terms of domain architecture, KH spans 561-625 (LIIWEIEVPK…HHVDKALNLI (65 aa)). The region spanning 712–771 (PVEITVICAAPGADGAWWRAQVVASYEETNEVEIRYVDYGGYKRVKVDVLRQIRSDFVTL) is the Tudor domain.

As to quaternary structure, interacts with SLC8A3. Interacts with CFAP91. Interacts with CLPB. Interacts with NDUFS1. As to expression, highest expression in testis, heart, liver, skeletal muscle, intestine and kidney, followed by brain and lung. No expression in spleen. Isoform 1/D-AKAP1A is expressed predominantly in testis whereas isoform 4/D-AKAP1D is expressed primarily in liver. Expression is decreased in hearts of diabetic mice (at protein level).

It is found in the mitochondrion outer membrane. Its subcellular location is the mitochondrion. The protein localises to the endoplasmic reticulum. Its function is as follows. Differentially targeted protein that binds to type I and II regulatory subunits of protein kinase A. Anchors them to the cytoplasmic face of the mitochondrial outer membrane or allows them to reside in the endoplasmic reticulum. Involved in mitochondrial-mediated antiviral innate immunity. Promotes translocation of NDUFS1 into mitochondria to regulate mitochondrial membrane respiratory chain NADH dehydrogenase (Complex I) activity. Under diabetic conditions, myocardial AKAP1 expression decreases which blocks the translocation of NDUFS1 from the cytosol to mitochondria. Reduction of NDUFS1 in mitochondria decreases ATP production and increases mitochondrial ROS level, which causes mitochondrial dysfunction and cell apoptosis, respectively, thereby leading to cardiac dysfunction. This Mus musculus (Mouse) protein is A-kinase anchor protein 1, mitochondrial.